Here is a 270-residue protein sequence, read N- to C-terminus: Formamidopyrimidine-DNA glycosylase (270 aa).

The Schiff-base intermediate with DNA role is filled by P2. The Proton donor role is filled by E3. The Proton donor; for beta-elimination activity role is filled by K58. 3 residues coordinate DNA: H91, R110, and R151. Residues 236–270 form an FPG-type zinc finger; the sequence is LVYGRDGLPCPNCGRALKHATIGQRASVWCSHCQR. R260 acts as the Proton donor; for delta-elimination activity in catalysis.

This sequence belongs to the FPG family. Monomer. Zn(2+) serves as cofactor.

It catalyses the reaction Hydrolysis of DNA containing ring-opened 7-methylguanine residues, releasing 2,6-diamino-4-hydroxy-5-(N-methyl)formamidopyrimidine.. The catalysed reaction is 2'-deoxyribonucleotide-(2'-deoxyribose 5'-phosphate)-2'-deoxyribonucleotide-DNA = a 3'-end 2'-deoxyribonucleotide-(2,3-dehydro-2,3-deoxyribose 5'-phosphate)-DNA + a 5'-end 5'-phospho-2'-deoxyribonucleoside-DNA + H(+). In terms of biological role, involved in base excision repair of DNA damaged by oxidation or by mutagenic agents. Acts as a DNA glycosylase that recognizes and removes damaged bases. Has a preference for oxidized purines, such as 7,8-dihydro-8-oxoguanine (8-oxoG). Has AP (apurinic/apyrimidinic) lyase activity and introduces nicks in the DNA strand. Cleaves the DNA backbone by beta-delta elimination to generate a single-strand break at the site of the removed base with both 3'- and 5'-phosphates. This is Formamidopyrimidine-DNA glycosylase from Stenotrophomonas maltophilia (strain K279a).